Consider the following 369-residue polypeptide: Succinyl-diaminopimelate desuccinylase (369 aa).

Histidine 77 provides a ligand contact to Zn(2+). Residue aspartate 79 is part of the active site. A Zn(2+)-binding site is contributed by aspartate 103. Glutamate 136 serves as the catalytic Proton acceptor. 3 residues coordinate Zn(2+): glutamate 137, glutamate 165, and histidine 345.

It belongs to the peptidase M20A family. The cofactor is Zn(2+). It depends on Co(2+) as a cofactor.

It catalyses the reaction N-succinyl-(2S,6S)-2,6-diaminopimelate + H2O = (2S,6S)-2,6-diaminopimelate + succinate. The protein operates within amino-acid biosynthesis; L-lysine biosynthesis via DAP pathway; LL-2,6-diaminopimelate from (S)-tetrahydrodipicolinate (succinylase route): step 3/3. In Corynebacterium glutamicum (strain ATCC 13032 / DSM 20300 / JCM 1318 / BCRC 11384 / CCUG 27702 / LMG 3730 / NBRC 12168 / NCIMB 10025 / NRRL B-2784 / 534), this protein is Succinyl-diaminopimelate desuccinylase (dapE).